The sequence spans 788 residues: Xylulose-5-phosphate phosphoketolase (788 aa).

It belongs to the XFP family. Homohexamer. Thiamine diphosphate is required as a cofactor.

The catalysed reaction is D-xylulose 5-phosphate + phosphate = acetyl phosphate + D-glyceraldehyde 3-phosphate + H2O. The chain is Xylulose-5-phosphate phosphoketolase (xpkA) from Lactiplantibacillus pentosus (Lactobacillus pentosus).